Consider the following 301-residue polypeptide: Probable alpha-L-glutamate ligase 1 (301 aa).

The ATP-grasp domain occupies 104 to 287 (LQLLSRKGIG…VTEPIVEYIE (184 aa)). ATP-binding positions include K141, 178-179 (EY), D187, and 211-213 (RSN). The Mg(2+) site is built by D248, E260, and N262. D248, E260, and N262 together coordinate Mn(2+).

Belongs to the RimK family. The cofactor is Mg(2+). Requires Mn(2+) as cofactor.

In Shewanella sp. (strain MR-4), this protein is Probable alpha-L-glutamate ligase 1.